A 265-amino-acid polypeptide reads, in one-letter code: MPLIRVLASLLILQLSYGKSLDNGAKAITSLDRIIGGFECNPSEHRSLVYLYNSAGFFCSGTLLNHEWVLTAAHCNREDIQIRLGVHNVHVHYEDEQIRVPKEKLCCLSTNNCTQFSQDIMLIRLNSPVNYSEHIAPLSLPSNPPSMGSVCCVMGWGTITSPEVTYPEVPHCVDINILHIPVCQAAYPTMSGKNILCAGILEGGKDSCKGDSGGPLICNGQIQGIVSWGRFPCAQFLEPGIYTKVFDYKDWIEGIIAGNSNVICP.

The N-terminal stretch at 1–18 (MPLIRVLASLLILQLSYG) is a signal peptide. A propeptide spanning residues 19–33 (KSLDNGAKAITSLDR) is cleaved from the precursor. The Peptidase S1 domain maps to 34–257 (IIGGFECNPS…YKDWIEGIIA (224 aa)). 7 disulfide bridges follow: Cys40/Cys172, Cys59/Cys75, Cys106/Cys152, Cys107/Cys264, Cys151/Cys218, Cys183/Cys197, and Cys208/Cys233. His74 (charge relay system) is an active-site residue. Asn112 carries N-linked (GlcNAc...) asparagine glycosylation. Asp119 (charge relay system) is an active-site residue. Asn130 is a glycosylation site (N-linked (GlcNAc...) asparagine). Catalysis depends on Ser212, which acts as the Charge relay system.

It belongs to the peptidase S1 family. Snake venom subfamily. In terms of assembly, monomer. Harobin contains three additional Cys residues than other snake venom serine proteases, suggesting an additional disulfide bond. In addition, it is more stable than other snake 6-disulfide-bond serine proteases, since it is less sensitive to DTT. As to expression, expressed by the venom gland.

It localises to the secreted. With respect to regulation, inhibited by PMSF. In terms of biological role, serine protein with fibrinolytic and fibrinogenolytic activities. Degrades Bbeta-chain (FGB) of fibrinogen first and then the Aalpha-chain (FGA). Gamma-chain (FGG) are also digested on prolonged incubation. In vitro, it cleaves high molecular weight (HMW) kininogen (KNG) releasing bradykinin that promotes vasodilation. In vitro and in vivo, it cleaves angiotensin-2 (AGT). This explains the reduction of blood pressure in hypertensive rats. Also has antithrombotic effects on thrombosis animal models. This Hydrophis hardwickii (Hardwick's spine-bellied seasnake) protein is Serine protease harobin.